Here is a 589-residue protein sequence, read N- to C-terminus: L-fucose isomerase (589 aa).

Active-site proton acceptor residues include Glu-340 and Asp-364. Residues Glu-340, Asp-364, and His-527 each contribute to the Mn(2+) site.

Belongs to the L-fucose isomerase family. Mn(2+) is required as a cofactor.

Its subcellular location is the cytoplasm. The catalysed reaction is L-fucose = L-fuculose. The protein operates within carbohydrate degradation; L-fucose degradation; L-lactaldehyde and glycerone phosphate from L-fucose: step 1/3. Converts the aldose L-fucose into the corresponding ketose L-fuculose. The protein is L-fucose isomerase of Haemophilus influenzae (strain PittEE).